The following is a 256-amino-acid chain: Probable histidine-binding protein (256 aa).

A signal peptide spans 1–19 (MKKFLTAFLVAFTGLFLVA). Cys20 is lipidated: N-palmitoyl cysteine. Cys20 carries the S-diacylglycerol cysteine lipid modification.

It belongs to the bacterial solute-binding protein 3 family.

It is found in the cell membrane. Functionally, involved in histidine transport. This chain is Probable histidine-binding protein (hisJ), found in Campylobacter jejuni subsp. jejuni serotype O:2 (strain ATCC 700819 / NCTC 11168).